Reading from the N-terminus, the 461-residue chain is Methylthioribose transporter (461 aa).

The next 12 membrane-spanning stretches (helical) occupy residues 33-53 (LLGI…TVAA), 56-76 (AGPA…LAAF), 102-122 (LLAF…LSAV), 152-172 (MAGA…TAIV), 185-205 (VIVL…IGYV), 213-233 (FMPF…FAYL), 254-274 (VGII…SLVL), 301-321 (VAGI…LALL), 355-375 (TWLT…GTLA), 376-396 (HLVN…VIVL), 409-429 (VPFV…FMYS), and 432-452 (GVTW…YFLY).

It belongs to the amino acid-polyamine-organocation (APC) superfamily.

Its subcellular location is the cell membrane. Its function is as follows. Involved in import of methylthioribose (MTR) into the cell. This is Methylthioribose transporter from Bacillus subtilis (strain 168).